A 155-amino-acid chain; its full sequence is Small ribosomal subunit protein uS7c (155 aa).

This sequence belongs to the universal ribosomal protein uS7 family. As to quaternary structure, part of the 30S ribosomal subunit.

It is found in the plastid. The protein resides in the chloroplast. One of the primary rRNA binding proteins, it binds directly to 16S rRNA where it nucleates assembly of the head domain of the 30S subunit. This chain is Small ribosomal subunit protein uS7c (rps7), found in Physcomitrium patens (Spreading-leaved earth moss).